The primary structure comprises 138 residues: Gas vesicle protein A (138 aa).

Positions 74–138 are disordered; the sequence is EAGPRKDPGL…STSRKKEEQE (65 aa). A compositionally biased stretch (low complexity) spans 116–129; sequence GSSSGSSSGSSSRS.

This sequence belongs to the gas vesicle GvpA family. In terms of assembly, the gas vesicle shell is 2 nm thick and consists of a single layer of this protein. It forms helical ribs nearly perpendicular to the long axis of the vesicle.

Its subcellular location is the gas vesicle shell. In terms of biological role, gas vesicles are hollow, gas filled proteinaceous nanostructures found in some microorganisms. During planktonic growth they allow positioning of the organism at a favorable depth for light or nutrient acquisition. GvpA forms the protein shell. It is not clear what function gas vesicles perform in soil bacteria. This is Gas vesicle protein A from Streptomyces sp. (strain CB03234).